The primary structure comprises 1700 residues: Ras-responsive element-binding protein 1 (1700 aa).

The segment at 31-63 (TENGGSPQGIKSPMKPPGPNRIGRRNQETKEEK) is disordered. Phosphoserine occurs at positions 36 and 42. 3 consecutive C2H2-type zinc fingers follow at residues 66–88 (YNCP…IRQH), 97–119 (HACS…MLVH), and 125–147 (YKCT…MKIH). The interval 146 to 195 (IHEKDTNSTTAAAPPSPLKRRRLSSKRKLSHDAESEDPGPAKKMVEDGQS) is disordered. Position 161 is a phosphoserine (Ser-161). Basic residues predominate over residues 163–174 (LKRRRLSSKRKL). Residues Ser-175 and Ser-180 each carry the phosphoserine modification. A compositionally biased stretch (basic and acidic residues) spans 184–195 (GPAKKMVEDGQS). A C2H2-type 4 zinc finger spans residues 206-228 (FHCPVCFKEFVCKYELETHMETH). A Phosphoserine modification is found at Ser-229. C2H2-type zinc fingers lie at residues 233-256 (LRCD…ALVH) and 314-336 (FVCD…RQSH). Glycyl lysine isopeptide (Lys-Gly) (interchain with G-Cter in SUMO2) cross-links involve residues Lys-433, Lys-500, Lys-549, Lys-564, Lys-591, and Lys-611. Residue Lys-613 forms a Glycyl lysine isopeptide (Lys-Gly) (interchain with G-Cter in SUMO1); alternate linkage. A Glycyl lysine isopeptide (Lys-Gly) (interchain with G-Cter in SUMO2); alternate cross-link involves residue Lys-613. Residue Lys-622 forms a Glycyl lysine isopeptide (Lys-Gly) (interchain with G-Cter in SUMO2) linkage. 5 C2H2-type zinc fingers span residues 641 to 663 (YPCR…VRSH), 669 to 691 (YQCN…IRTH), 697 to 720 (YICK…RKKH), 751 to 782 (TVCR…GGCH), and 788 to 813 (FECK…QHLH). Residues Lys-855, Lys-883, and Lys-911 each participate in a glycyl lysine isopeptide (Lys-Gly) (interchain with G-Cter in SUMO2) cross-link. Disordered regions lie at residues 939 to 991 (IPKS…SLET) and 1092 to 1177 (ADPG…AVDL). Residues 944 to 961 (KKGDKDTVVPSDAKKPEP) show a composition bias toward basic and acidic residues. Ser-970 is subject to Phosphoserine. A compositionally biased stretch (polar residues) spans 1097-1111 (SITSSNTVATDSPGS). Residues Ser-1125, Ser-1137, and Ser-1138 each carry the phosphoserine modification. The segment covering 1137 to 1146 (SSPEEALPTE) has biased composition (low complexity). Over residues 1155–1165 (SRKRGRKRGLR) the composition is skewed to basic residues. Residues Ser-1172, Ser-1179, Ser-1180, and Ser-1230 each carry the phosphoserine modification. Disordered stretches follow at residues 1195-1235 (TNKF…AEDR), 1273-1368 (HTDS…QSLD), 1383-1521 (SEAG…RKKV), and 1564-1670 (VRHQ…SPAA). A C2H2-type 12 zinc finger spans residues 1251 to 1273 (INCPHCPRVFPWASSLQRHMLTH). Low complexity predominate over residues 1273-1285 (HTDSQSDTDTLTT). A compositionally biased stretch (acidic residues) spans 1327 to 1346 (SEEEEEKETEENPEPEEECR). The segment at 1400-1422 (HACDTCGKNFKFLGTLSRHKKAH) adopts a C2H2-type 13 zinc-finger fold. A phosphoserine mark is found at Ser-1450 and Ser-1452. The span at 1492–1507 (TAEKRGDGDKRPKTDS) shows a compositional bias: basic and acidic residues. 2 consecutive C2H2-type zinc fingers follow at residues 1520–1542 (KVCS…MRSH) and 1548–1570 (YKCQ…QRIH). The segment covering 1564-1580 (VRHQRIHQKARHSKHHG) has biased composition (basic residues). Ser-1593 and Ser-1606 each carry phosphoserine. Over residues 1645–1660 (AEQAAEPSAPKEQASP) the composition is skewed to low complexity. Ser-1667 carries the phosphoserine modification.

The protein belongs to the krueppel C2H2-type zinc-finger protein family. In terms of assembly, interacts with NEUROD1. Interacts with AR. Expressed in splenic B-cells.

It is found in the nucleus speckle. In terms of biological role, transcription factor that binds specifically to the RAS-responsive elements (RRE) of gene promoters. Represses the angiotensinogen gene. Negatively regulates the transcriptional activity of AR. Potentiates the transcriptional activity of NEUROD1. Binds specifically to the allelic variant of the CDKN2A promoter present in Balb/c mice, which leads to a down-regulation of CDKN2A expression in this strain, and, as a consequence, to an elevated susceptibility to pristane-induced tumors. Promotes brown adipocyte differentiation. May be involved in Ras/Raf-mediated cell differentiation by enhancing calcitonin expression. In Mus musculus (Mouse), this protein is Ras-responsive element-binding protein 1 (Rreb1).